Reading from the N-terminus, the 85-residue chain is Major outer membrane protein 1 (85 aa).

Positions 1–18 (MEAREVEEMRRSRLLTLG) are cleaved as a signal peptide. Residues 22 to 42 (YTAVIALAALVLVMGALGLVL) form a helical membrane-spanning segment.

In terms of assembly, forms extremely stable complexes with apparent masses of 150, 50, 45 and 38 kDa. Found in a ring-shaped complex of 7 nm diameter with a 2 nm channel through the middle. Complete denaturation requires temperatures over 110 degrees Celsius.

Its subcellular location is the cell outer membrane. Functionally, the most abundant protein of the outer membrane, it forms a pore through it. The polypeptide is Major outer membrane protein 1 (ihomp1) (Ignicoccus hospitalis (strain KIN4/I / DSM 18386 / JCM 14125)).